The chain runs to 354 residues: Uroporphyrinogen decarboxylase (354 aa).

Substrate-binding positions include 27–31 (RQAGR), aspartate 77, tyrosine 153, threonine 208, and histidine 326.

It belongs to the uroporphyrinogen decarboxylase family. Homodimer.

The protein localises to the cytoplasm. It catalyses the reaction uroporphyrinogen III + 4 H(+) = coproporphyrinogen III + 4 CO2. Its pathway is porphyrin-containing compound metabolism; protoporphyrin-IX biosynthesis; coproporphyrinogen-III from 5-aminolevulinate: step 4/4. Functionally, catalyzes the decarboxylation of four acetate groups of uroporphyrinogen-III to yield coproporphyrinogen-III. The sequence is that of Uroporphyrinogen decarboxylase from Neisseria meningitidis serogroup C / serotype 2a (strain ATCC 700532 / DSM 15464 / FAM18).